The sequence spans 501 residues: O-phosphoseryl-tRNA(Sec) selenium transferase (501 aa).

Residues 1–44 (MNRESFAAGERLVSPAYVRQGCEARRSHEHLIRLLLEKGKCPEN) form a tetramerization region. Phosphoserine is present on Ser14. Residue Arg75 participates in pyridoxal 5'-phosphate binding. Residues 96–106 (GRSGDISAVQP) are phosphate loop (P-loop). Arg97, Ser98, and Gln105 together coordinate substrate. Arg271 contributes to the tRNA binding site. Lys284 is modified (N6-(pyridoxal phosphate)lysine). Arg313 contributes to the substrate binding site. TRNA contacts are provided by Arg398 and Lys463. The SLA/LP epitope stretch occupies residues 474–493 (DKTEDVDIEEMALKLDNVLL).

The protein belongs to the SepSecS family. Homotetramer formed by a catalytic dimer and a non-catalytic dimer serving as a binding platform that orients tRNASec for catalysis. Each tetramer binds the CCA ends of two tRNAs which point to the active sites of the catalytic dimer. It depends on pyridoxal 5'-phosphate as a cofactor. As to expression, primarily expressed in liver, pancreas, kidney and lung. Overexpressed in PHA-stimulated T-cells.

Its subcellular location is the cytoplasm. It carries out the reaction O-phospho-L-seryl-tRNA(Sec) + selenophosphate + H2O = L-selenocysteinyl-tRNA(Sec) + 2 phosphate. It functions in the pathway aminoacyl-tRNA biosynthesis; selenocysteinyl-tRNA(Sec) biosynthesis; selenocysteinyl-tRNA(Sec) from L-seryl-tRNA(Sec) (archaeal/eukaryal route): step 2/2. In terms of biological role, converts O-phosphoseryl-tRNA(Sec) to selenocysteinyl-tRNA(Sec) required for selenoprotein biosynthesis. In Homo sapiens (Human), this protein is O-phosphoseryl-tRNA(Sec) selenium transferase (SEPSECS).